Reading from the N-terminus, the 84-residue chain is Dolichol phosphate-mannose biosynthesis regulatory protein (84 aa).

2 consecutive transmembrane segments (helical) span residues 11-31 (LGLV…VILL) and 49-69 (YAIA…GIFI).

Belongs to the DPM2 family. In terms of assembly, component of the dolichol-phosphate mannose (DPM) synthase complex composed of DPM1, DPM2 and DPM3; in the complex interacts directly with DPM3. Component of the glycosylphosphatidylinositol-N-acetylglucosaminyltransferase (GPI-GnT) complex composed at least by PIGA, PIGC, PIGH, PIGP, PIGQ, PIGY and DPM2. Interacts with PIGA, PIGC and PIGQ.

The protein resides in the endoplasmic reticulum membrane. It functions in the pathway protein modification; protein glycosylation. Functionally, regulates the biosynthesis of dolichol phosphate-mannose. Regulatory subunit of the dolichol-phosphate mannose (DPM) synthase complex; essential for the ER localization and stable expression of DPM1. Part of the glycosylphosphatidylinositol-N-acetylglucosaminyltransferase (GPI-GnT) complex that catalyzes the transfer of N-acetylglucosamine from UDP-N-acetylglucosamine to phosphatidylinositol and participates in the first step of GPI biosynthesis. May act by regulating the GPI-GNT complex. The chain is Dolichol phosphate-mannose biosynthesis regulatory protein from Bos taurus (Bovine).